Here is a 266-residue protein sequence, read N- to C-terminus: UPF0294 protein YafD (266 aa).

The protein belongs to the UPF0294 family.

The protein localises to the cytoplasm. This chain is UPF0294 protein YafD, found in Salmonella dublin (strain CT_02021853).